Here is a 178-residue protein sequence, read N- to C-terminus: MEQYHGTTIVSVRRGNQVALGGDGQVTLGNIVMKGTARKVRRIYNGKVLVGFAGSTADAFSLLDRFEAKLEKYQGNLTRAAVDLAKDWRSDRALRRLEAMLITADKDTTLVITGNGDVLDPEGGIAAIGSGGAYAQSAAKALVENTELPPKDVVEKALTIAGELCIYTNTNFVIETLD.

Residue threonine 7 is part of the active site. 3 residues coordinate Na(+): glycine 162, cysteine 165, and threonine 168.

It belongs to the peptidase T1B family. HslV subfamily. In terms of assembly, a double ring-shaped homohexamer of HslV is capped on each side by a ring-shaped HslU homohexamer. The assembly of the HslU/HslV complex is dependent on binding of ATP.

The protein localises to the cytoplasm. It catalyses the reaction ATP-dependent cleavage of peptide bonds with broad specificity.. Its activity is regulated as follows. Allosterically activated by HslU binding. Functionally, protease subunit of a proteasome-like degradation complex believed to be a general protein degrading machinery. This chain is ATP-dependent protease subunit HslV, found in Cupriavidus metallidurans (strain ATCC 43123 / DSM 2839 / NBRC 102507 / CH34) (Ralstonia metallidurans).